A 1791-amino-acid polypeptide reads, in one-letter code: Brefeldin A-inhibited guanine nucleotide-exchange protein 2 (1791 aa).

N-acetylmethionine is present on Met-1. Residues Gln-2 to Thr-224 form a DCB; DCB:DCB domain and DCB:HUS domain interaction region. Disordered stretches follow at residues Leu-208–Ala-292 and Ala-311–Asp-350. Phosphoserine occurs at positions 214, 218, and 227. Over residues Ser-214–Ala-225 the composition is skewed to polar residues. Positions Leu-233–Thr-243 are enriched in polar residues. Thr-244 carries the phosphothreonine modification. Positions Thr-244–Arg-257 are enriched in basic and acidic residues. Ser-277 carries the phosphoserine modification. Residues Ser-355 and Ser-356 each carry the phosphoserine modification. Positions Ala-515 to Asn-535 are HUS; DCB:HUS domain interaction. A Phosphoserine modification is found at Ser-621. At Thr-623 the chain carries Phosphothreonine. Ser-624 is subject to Phosphoserine. The residue at position 633 (Thr-633) is a Phosphothreonine. The 132-residue stretch at Phe-661–Ser-792 folds into the SEC7 domain. Ser-707, Ser-1518, Ser-1520, Ser-1521, Ser-1532, Ser-1535, Ser-1541, and Ser-1788 each carry phosphoserine.

As to quaternary structure, homodimer. Interacts with ARFGEF1/BIG1; both proteins are probably part of the same or very similar macromolecular complexes. Interacts with PRKAR1A, PRKAR2A, PRKAR1B, PRKAR2B, PPP1CC, PDE3A, TNFRSF1A, MYCBP and EXOC7. Interacts with GABRB1, GABRB2 and GABRB3. In terms of processing, in vitro phosphorylated by PKA reducing its GEF activity and dephosphorylated by phosphatase PP1. Expressed in brain (at protein level).

Its subcellular location is the cytoplasm. The protein resides in the membrane. The protein localises to the golgi apparatus. It is found in the perinuclear region. It localises to the trans-Golgi network. Its subcellular location is the endosome. The protein resides in the cytoskeleton. The protein localises to the microtubule organizing center. It is found in the centrosome. It localises to the cell projection. Its subcellular location is the dendrite. The protein resides in the cytoplasmic vesicle. The protein localises to the synapse. Its activity is regulated as follows. Inhibited by brefeldin A. Its function is as follows. Promotes guanine-nucleotide exchange on ARF1 and ARF3 and to a lower extent on ARF5 and ARF6. Promotes the activation of ARF1/ARF5/ARF6 through replacement of GDP with GTP. Involved in the regulation of Golgi vesicular transport. Required for the integrity of the endosomal compartment. Involved in trafficking from the trans-Golgi network (TGN) to endosomes and is required for membrane association of the AP-1 complex and GGA1. Seems to be involved in recycling of the transferrin receptor from recycling endosomes to the plasma membrane. Probably is involved in the exit of GABA(A) receptors from the endoplasmic reticulum. Involved in constitutive release of tumor necrosis factor receptor 1 via exosome-like vesicles; the function seems to involve PKA and specifically PRKAR2B. Proposed to act as A kinase-anchoring protein (AKAP) and may mediate crosstalk between Arf and PKA pathways. This Rattus norvegicus (Rat) protein is Brefeldin A-inhibited guanine nucleotide-exchange protein 2 (Arfgef2).